A 479-amino-acid polypeptide reads, in one-letter code: MTHPVISLKPSYNSVIRGCPGLPDTLPRIECQLRVRSNNSLPFKLVKIEIVLKTIEIYFNKNLYSSNNSSFTPFNRPSDPSNGHSDTSNQNISIHYKKNIVLSHPTHDGDDLNNDLIGIDIPLTIGLPDDIKETNYNPKFGKTQTFLDCTVFYTEVGGGSSNKKRNFLYPVNVERYTYLPSPSYFRPINRSNITSPDQKFLISYSIENPCVSMNNDTLKLSISIRLNPFPNNATTPSSNDFDVSTPTLFSTKKKFKSKLKLKSITTQILEYLEILKNQSEFSSTQTTNILQTSVRQVDQIISMNSMIFQFNLKIFTKDKILQSFRSSESSCPETKVLINKIDDIPLQYHSSITTIGQHFNVSHYLSIRFKFNKSLKNFEINHPLIISFWSVSQLPLIENLILQERQTAKFAKKFYKNFGRIKNTSNNNNSSNCLEYPSLPPIIYNFNDPETNNRFNILYSQKDPSRTDPSKLRRVPVIQ.

Residues S460–Q479 are disordered.

Its function is as follows. Regulator of RHO1 signaling that acts as a cofactor required for the efficient localization of the TUS1 GTP exchange factor (GEF) for RHO1 to the bud neck during all phases of cytokinesis. RHO1 is a key, essential hub protein in the cell wall integrity (CWI) pathway in which activated RHO1-GTP binds directly to and activates multiple different downstream effectors required for cell wall synthesis and actin assembly during cytokinesis. The protein is RHO1 GEF localizing protein 1 of Saccharomyces cerevisiae (strain ATCC 204508 / S288c) (Baker's yeast).